The chain runs to 224 residues: Ras-related protein RABA4b (224 aa).

Alanine 2 is subject to N-acetylalanine. 24 to 31 is a GTP binding site; that stretch reads GDSAVGKS. The Effector region signature appears at 46–54; sequence SKATIGVEF. Residues 72-76, 130-133, and 160-161 contribute to the GTP site; these read DTAGQ, NKSD, and SA. Residues cysteine 220 and cysteine 221 are each lipidated (S-geranylgeranyl cysteine).

Belongs to the small GTPase superfamily. Rab family. In terms of assembly, interacts with TCTP1. Expressed in roots, stems, leaves and flowers. Expressed in tips of growing root hair cells.

The protein resides in the early endosome membrane. It localises to the golgi apparatus. Its subcellular location is the trans-Golgi network membrane. Its function is as follows. Regulator of membrane trafficking. May be required for secretion of cell wall components in cells. The protein is Ras-related protein RABA4b of Arabidopsis thaliana (Mouse-ear cress).